A 116-amino-acid polypeptide reads, in one-letter code: NADH dehydrogenase [ubiquinone] iron-sulfur protein 6, mitochondrial (116 aa).

The N-terminal 20 residues, Met1–Phe20, are a transit peptide targeting the mitochondrion. Residues Lys90 and Lys112 each carry the N6-acetyllysine modification.

This sequence belongs to the complex I NDUFS6 subunit family. As to quaternary structure, mammalian complex I is composed of 45 different subunits. This is a component of the iron-sulfur (IP) fragment of the enzyme.

Its subcellular location is the mitochondrion inner membrane. Its function is as follows. Accessory subunit of the mitochondrial membrane respiratory chain NADH dehydrogenase (Complex I), that is believed not to be involved in catalysis. Complex I functions in the transfer of electrons from NADH to the respiratory chain. The immediate electron acceptor for the enzyme is believed to be ubiquinone. The polypeptide is NADH dehydrogenase [ubiquinone] iron-sulfur protein 6, mitochondrial (Ndufs6) (Mus musculus (Mouse)).